A 96-amino-acid chain; its full sequence is Defensin-like protein 69 (96 aa).

The first 19 residues, 1–19, serve as a signal peptide directing secretion; sequence MGSSKLLVAFTLIVMMTIS. Disulfide bonds link cysteine 37-cysteine 86, cysteine 41-cysteine 64, cysteine 50-cysteine 84, and cysteine 54-cysteine 85.

It belongs to the DEFL family.

Its subcellular location is the secreted. This Arabidopsis thaliana (Mouse-ear cress) protein is Defensin-like protein 69.